The following is a 148-amino-acid chain: Protein E6 (148 aa).

2 zinc fingers span residues 34–71 (CKFC…CSSC) and 108–144 (CRYC…CRHC).

The protein belongs to the papillomaviridae E6 protein family. As to quaternary structure, forms homodimers. Interacts with ubiquitin-protein ligase UBE3A/E6-AP; this interaction stimulates UBE3A ubiquitin activity. Interacts with host BAK1.

It localises to the host cytoplasm. Its subcellular location is the host nucleus. In terms of biological role, plays a major role in the induction and maintenance of cellular transformation. E6 associates with host UBE3A/E6-AP ubiquitin-protein ligase and modulates its activity. Protects host keratinocytes from apoptosis by mediating the degradation of host BAK1. May also inhibit host immune response. This Human papillomavirus 9 protein is Protein E6.